The primary structure comprises 402 residues: Enoyl-[acyl-carrier-protein] reductase [NADH] (402 aa).

NAD(+) is bound by residues 48–53 (GASSGY), 74–75 (FE), 111–112 (DA), and 140–141 (LA). Residue tyrosine 226 coordinates substrate. The active-site Proton donor is tyrosine 236. NAD(+) contacts are provided by residues lysine 245 and 274-276 (VVT).

Belongs to the TER reductase family. As to quaternary structure, monomer.

The enzyme catalyses a 2,3-saturated acyl-[ACP] + NAD(+) = a (2E)-enoyl-[ACP] + NADH + H(+). The catalysed reaction is a 2,3-saturated acyl-CoA + NAD(+) = a (2E)-enoyl-CoA + NADH + H(+). It functions in the pathway lipid metabolism; fatty acid biosynthesis. Involved in the final reduction of the elongation cycle of fatty acid synthesis (FAS II). Catalyzes the reduction of a carbon-carbon double bond in an enoyl moiety that is covalently linked to an acyl carrier protein (ACP). It can also use crotonyl-CoA. The sequence is that of Enoyl-[acyl-carrier-protein] reductase [NADH] from Xanthomonas oryzae pv. oryzae (strain MAFF 311018).